The sequence spans 154 residues: 6,7-dimethyl-8-ribityllumazine synthase (154 aa).

5-amino-6-(D-ribitylamino)uracil-binding positions include phenylalanine 22, 57–59 (AYE), and 81–83 (AVI). 86 to 87 (GT) provides a ligand contact to (2S)-2-hydroxy-3-oxobutyl phosphate. The Proton donor role is filled by histidine 89. Residue phenylalanine 114 participates in 5-amino-6-(D-ribitylamino)uracil binding. Arginine 128 contacts (2S)-2-hydroxy-3-oxobutyl phosphate.

It belongs to the DMRL synthase family. In terms of assembly, forms an icosahedral capsid composed of 60 subunits, arranged as a dodecamer of pentamers.

It catalyses the reaction (2S)-2-hydroxy-3-oxobutyl phosphate + 5-amino-6-(D-ribitylamino)uracil = 6,7-dimethyl-8-(1-D-ribityl)lumazine + phosphate + 2 H2O + H(+). The protein operates within cofactor biosynthesis; riboflavin biosynthesis; riboflavin from 2-hydroxy-3-oxobutyl phosphate and 5-amino-6-(D-ribitylamino)uracil: step 1/2. In terms of biological role, catalyzes the formation of 6,7-dimethyl-8-ribityllumazine by condensation of 5-amino-6-(D-ribitylamino)uracil with 3,4-dihydroxy-2-butanone 4-phosphate. This is the penultimate step in the biosynthesis of riboflavin. The chain is 6,7-dimethyl-8-ribityllumazine synthase from Idiomarina loihiensis (strain ATCC BAA-735 / DSM 15497 / L2-TR).